Here is a 128-residue protein sequence, read N- to C-terminus: Large ribosomal subunit protein bL17 (128 aa).

It belongs to the bacterial ribosomal protein bL17 family. In terms of assembly, part of the 50S ribosomal subunit. Contacts protein L32.

The polypeptide is Large ribosomal subunit protein bL17 (Ehrlichia ruminantium (strain Gardel)).